The following is a 402-amino-acid chain: Hyaluronan and proteoglycan link protein 4 (402 aa).

The signal sequence occupies residues 1–29 (MVCARAALGPGALWAAAWGVLLLTAPAGA). One can recognise an Ig-like C2-type domain in the interval 46–161 (SVVVQTAPGQ…DAGMVKLDLE (116 aa)). 5 disulfides stabilise this stretch: Cys68–Cys143, Cys185–Cys266, Cys209–Cys230, Cys293–Cys363, and Cys318–Cys339. The N-linked (GlcNAc...) asparagine glycan is linked to Asn132. Link domains follow at residues 163-268 (VVFP…FCFT) and 273-365 (GRVF…YCYR).

This sequence belongs to the HAPLN family. As to expression, expressed predominantly in brain.

The protein localises to the secreted. It is found in the extracellular space. It localises to the extracellular matrix. Its function is as follows. Essential for the proper localization of brevican (BCAN), mainly as a perineuronal nets (PNNs)-type deposition in the brainstem and cerebellum thereby playing a key role in the formation and structural organization of PNNs. Contributes to the formation and transmission of inhibitory GABAergic synapses between Purkinje cells and deep cerebellar nuclei neurons. The protein is Hyaluronan and proteoglycan link protein 4 (HAPLN4) of Homo sapiens (Human).